The following is a 211-amino-acid chain: MTSPVLQTVALACERDLRLLFDNLELRLASGDMVQISGPNGSGKTSLLRLLAGLMQPTDGQVLLNGKPLGEQRSELARNLLWIGHAAGIKDLLTPEENLTWLCALHQPAERDAIWQALAAVGLRGFEDVPCHSLSAGQQRRVALARLYLDSPPLWILDEPFTALDKQGVAQLEEHLAGHCERGGLVVLTTHHTLSRMPAGYRDIDLGNWAV.

In terms of domain architecture, ABC transporter spans 6-211 (LQTVALACER…RDIDLGNWAV (206 aa)). 38–45 (GPNGSGKT) lines the ATP pocket.

It belongs to the ABC transporter superfamily. CcmA exporter (TC 3.A.1.107) family. As to quaternary structure, the complex is composed of two ATP-binding proteins (CcmA) and two transmembrane proteins (CcmB).

It is found in the cell inner membrane. It carries out the reaction heme b(in) + ATP + H2O = heme b(out) + ADP + phosphate + H(+). Part of the ABC transporter complex CcmAB involved in the biogenesis of c-type cytochromes; once thought to export heme, this seems not to be the case, but its exact role is uncertain. Responsible for energy coupling to the transport system. This is Cytochrome c biogenesis ATP-binding export protein CcmA from Pseudomonas fluorescens (strain Pf0-1).